The sequence spans 120 residues: Large ribosomal subunit protein uL18 (120 aa).

It belongs to the universal ribosomal protein uL18 family. As to quaternary structure, part of the 50S ribosomal subunit; part of the 5S rRNA/L5/L18/L25 subcomplex. Contacts the 5S and 23S rRNAs.

This is one of the proteins that bind and probably mediate the attachment of the 5S RNA into the large ribosomal subunit, where it forms part of the central protuberance. The polypeptide is Large ribosomal subunit protein uL18 (Bartonella tribocorum (strain CIP 105476 / IBS 506)).